The primary structure comprises 209 residues: Large ribosomal subunit protein uL4 (209 aa).

The segment at 46–76 (RGTASTKTRGEVSGGGRKPWRQKGTGRARHG) is disordered. A compositionally biased stretch (basic residues) spans 63-76 (KPWRQKGTGRARHG).

It belongs to the universal ribosomal protein uL4 family. Part of the 50S ribosomal subunit.

One of the primary rRNA binding proteins, this protein initially binds near the 5'-end of the 23S rRNA. It is important during the early stages of 50S assembly. It makes multiple contacts with different domains of the 23S rRNA in the assembled 50S subunit and ribosome. Functionally, forms part of the polypeptide exit tunnel. This Halothermothrix orenii (strain H 168 / OCM 544 / DSM 9562) protein is Large ribosomal subunit protein uL4.